The following is a 482-amino-acid chain: FAD-linked oxidoreductase alt4 (482 aa).

One can recognise an FAD-binding PCMH-type domain in the interval 53–211 (ERPTYLAIVD…LEATFQVYPQ (159 aa)).

Belongs to the oxygen-dependent FAD-linked oxidoreductase family. FAD is required as a cofactor.

Its pathway is secondary metabolite biosynthesis. Its function is as follows. FAD-linked oxidoreductase; part of the gene cluster that mediates the biosynthesis of alternapyrone derivatives. Alternapyrone is a decaketide with octa-methylation from methionine on every C2 unit except the third unit. All the domains in the polyketide synthase alt5 are apparently involved in alternapyrone synthesis, that is, the 8 CMeT, 7 KR, 7 DH, and 4 ER reactions in the 9 KS-mediated condensation steps required for alternapyrone synthesis. the alternapyrone produced by alt5 might be intensively modified by cytochrome P450 monooxygenases alt1, alt2 and alt3 and FAD-dependent oxidoreductase alt4 present in the alt gene cluster. This is FAD-linked oxidoreductase alt4 from Alternaria solani.